Reading from the N-terminus, the 205-residue chain is Ribonuclease HII (205 aa).

Positions 16-205 (VSEVGIDEVG…KSFLKKSNLF (190 aa)) constitute an RNase H type-2 domain. Residues D22, E23, and D118 each coordinate a divalent metal cation.

The protein belongs to the RNase HII family. Requires Mn(2+) as cofactor. Mg(2+) is required as a cofactor.

It localises to the cytoplasm. The enzyme catalyses Endonucleolytic cleavage to 5'-phosphomonoester.. Its function is as follows. Endonuclease that specifically degrades the RNA of RNA-DNA hybrids. In Prochlorococcus marinus (strain MIT 9215), this protein is Ribonuclease HII.